The chain runs to 277 residues: MKKTQQKEIENVTNITGVRQIELWRRDDLQHPRLDEVAEEVPVALVYNGISHVVMMASPKDLEYFALGFSLSEGIIESPRDIFGMDVVPSCNGLEVQIELSSRRFMGLKERRRALAGRTGCGVCGVEQLNDIGKPVQPLPFTQMFDLNKLDDALRHLNDFQPVGQLTGCTHAAAWMLPSGELVGGHEDVGRHVALDKLLGRRSQEGESWQQGAVLVSSRASYEMVQKSAMCGVEILFAVSAATTLAVEVAERCNLTLVGFCKPGRATVYTHPQRLSN.

C121 (cysteine persulfide intermediate) is an active-site residue. 260–265 (FCKPGR) is a binding site for Mo-bis(molybdopterin guanine dinucleotide).

This sequence belongs to the FdhD family.

Its subcellular location is the cytoplasm. Functionally, required for formate dehydrogenase (FDH) activity. Acts as a sulfur carrier protein that transfers sulfur from IscS to the molybdenum cofactor prior to its insertion into FDH. The polypeptide is Sulfur carrier protein FdhD (Escherichia coli O6:H1 (strain CFT073 / ATCC 700928 / UPEC)).